The following is a 264-amino-acid chain: NAD-capped RNA hydrolase NudC (264 aa).

Arg70 serves as a coordination point for substrate. Zn(2+)-binding residues include Cys99 and Cys102. Glu112 is a substrate binding site. Zn(2+) contacts are provided by Cys117 and Cys120. Tyr125 contributes to the substrate binding site. The 128-residue stretch at 126-253 (PVICPSIIVA…TIARKLIHVT (128 aa)) folds into the Nudix hydrolase domain. Ala162, Glu178, and Glu182 together coordinate a divalent metal cation. The Nudix box motif lies at 163 to 184 (GFVEVGETFEQAVQREVFEETG). 196–203 (QPWAFPNS) contacts substrate. Glu223 provides a ligand contact to a divalent metal cation. Substrate is bound at residue Ala246.

The protein belongs to the Nudix hydrolase family. NudC subfamily. As to quaternary structure, homodimer. Requires Mg(2+) as cofactor. Mn(2+) serves as cofactor. The cofactor is Zn(2+).

It catalyses the reaction a 5'-end NAD(+)-phospho-ribonucleoside in mRNA + H2O = a 5'-end phospho-adenosine-phospho-ribonucleoside in mRNA + beta-nicotinamide D-ribonucleotide + 2 H(+). It carries out the reaction NAD(+) + H2O = beta-nicotinamide D-ribonucleotide + AMP + 2 H(+). The enzyme catalyses NADH + H2O = reduced beta-nicotinamide D-ribonucleotide + AMP + 2 H(+). Functionally, mRNA decapping enzyme that specifically removes the nicotinamide adenine dinucleotide (NAD) cap from a subset of mRNAs by hydrolyzing the diphosphate linkage to produce nicotinamide mononucleotide (NMN) and 5' monophosphate mRNA. The NAD-cap is present at the 5'-end of some mRNAs and stabilizes RNA against 5'-processing. Has preference for mRNAs with a 5'-end purine. Catalyzes the hydrolysis of a broad range of dinucleotide pyrophosphates. The chain is NAD-capped RNA hydrolase NudC from Haemophilus influenzae (strain 86-028NP).